The chain runs to 141 residues: Keratin-associated protein 19-2 (141 aa).

Positions 5-135 (SGYSGGLGYG…CRRSSCCGGY (131 aa)) are 48 X 2 AA repeats of G-[YCGS].

Belongs to the KRTAP type 19 family. As to quaternary structure, interacts with hair keratins. Strong expression in narrowly defined pattern restricted to the lower and middle cortical regions of the hair shaft in both developing and cycling hair. During hair follicle regression (catagen), expression levels decrease until expression is no longer detectable in follicles at resting stage (telogen).

In the hair cortex, hair keratin intermediate filaments are embedded in an interfilamentous matrix, consisting of hair keratin-associated proteins (KRTAP), which are essential for the formation of a rigid and resistant hair shaft through their extensive disulfide bond cross-linking with abundant cysteine residues of hair keratins. The matrix proteins include the high-sulfur and high-glycine-tyrosine keratins. This is Keratin-associated protein 19-2 (Krtap19-2) from Mus musculus (Mouse).